The chain runs to 641 residues: FAD-binding monooxygenase ausB (641 aa).

Positions 1-68 are disordered; the sequence is MAIGPKPESI…DSTTNVPYSL (68 aa). Residues 49–68 are compositionally biased toward polar residues; sequence WLTSTDQPQPDSTTNVPYSL. Residues 115 to 118, 127 to 128, and tyrosine 133 contribute to the FAD site; these read TWYW and DI. 125–127 provides a ligand contact to NADP(+); that stretch reads MCD. Residues 272–278 and 295–296 contribute to the NADP(+) site; these read TGSTAVQ and RT.

The protein belongs to the FAD-binding monooxygenase family. Requires FAD as cofactor.

It carries out the reaction protoaustinoid A + AH2 + O2 = berkeleyone A + A + H2O. Its pathway is secondary metabolite biosynthesis; terpenoid biosynthesis. FAD-binding monooxygenase; part of the gene cluster A that mediates the biosynthesis of the fungal meroterpenoid acetoxydehydroaustin. The first step of the pathway is the synthesis of 3,5-dimethylorsellinic acid by the polyketide synthase ausA. 3,5-dimethylorsellinic acid is then prenylated by the polyprenyl transferase ausN. Further epoxidation by the FAD-dependent monooxygenase ausM and cyclization by the probable terpene cyclase ausL lead to the formation of protoaustinoid A. Protoaustinoid A is then oxidized to spiro-lactone preaustinoid A3 by the combined action of the FAD-binding monooxygenases ausB and ausC, and the dioxygenase ausE. Acid-catalyzed keto-rearrangement and ring contraction of the tetraketide portion of preaustinoid A3 by ausJ lead to the formation of preaustinoid A4. The aldo-keto reductase ausK, with the help of ausH, is involved in the next step by transforming preaustinoid A4 into isoaustinone which is in turn hydroxylated by the P450 monooxygenase ausI to form austinolide. The cytochrome P450 monooxygenase ausG then modifies austinolide to austinol. Austinol is further acetylated to austin by the O-acetyltransferase ausP, which spontaneously changes to dehydroaustin. The cytochrome P450 monooxygenase then converts dehydroaustin is into 7-dehydrodehydroaustin. The hydroxylation catalyzed by ausR permits the second O-acetyltransferase ausQ to add an additional acetyl group to the molecule, leading to the formation of acetoxydehydroaustin. Due to genetic rearrangements of the clusters and the subsequent loss of some enzymes, the end product of the Penicillium brasilianum austinoid biosynthesis clusters is acetoxydehydroaustin. The polypeptide is FAD-binding monooxygenase ausB (Penicillium brasilianum).